A 606-amino-acid polypeptide reads, in one-letter code: Endo-beta-1,4-xylanase Xyn10C (606 aa).

The N-terminal stretch at 1-19 is a signal peptide; the sequence is MKKIQQLLMLSLISSTLIA. The N-palmitoyl cysteine moiety is linked to residue C20. C20 carries the S-diacylglycerol cysteine lipid modification. A disordered region spans residues 23-64; that stretch reads GGGGGSTPTTSSSPQSSSPASTPSSASSSSIISSSSLSSSLS. The segment covering 29–64 has biased composition (low complexity); that stretch reads TPTTSSSPQSSSPASTPSSASSSSIISSSSLSSSLS. The CBM15 domain occupies 91 to 242; the sequence is GNVVIEVDMA…KSVTITLAQE (152 aa). Positions 106 and 171 each coordinate a carbohydrate. A disulfide bridge connects residues C183 and C200. Q217 is an a carbohydrate binding site. The GH10 domain maps to 245–596; the sequence is SANVDHLRDL…KPALRGFADA (352 aa). Substrate is bound by residues 296-299, H332, and N384; that span reads NIMK. The Proton donor role is filled by E385. The active-site Nucleophile is the E497. W552 lines the substrate pocket.

This sequence belongs to the glycosyl hydrolase 10 (cellulase F) family.

The protein localises to the cell outer membrane. The enzyme catalyses Endohydrolysis of (1-&gt;4)-beta-D-xylosidic linkages in xylans.. The protein operates within glycan degradation; xylan degradation. Endo-acting xylanase which specifically cleaves internal linkages on the xylan backbone, releasing xylooligosaccharides. Is able to hydrolyze oat spelt xylan, the arabinoxylans from wheat and rye, and glucuronoxylan. Also displays very low activity against xylooligosaccharides. During the xylan degradation process, Xyn10C may act on the soluble xylans and long xylooligosaccharides products released by the secreted xylanases Xyn11A, Xyn11B and Xyn10A. The protein is Endo-beta-1,4-xylanase Xyn10C (xyn10C) of Cellvibrio japonicus (Pseudomonas fluorescens subsp. cellulosa).